We begin with the raw amino-acid sequence, 559 residues long: SH3 domain-binding protein 2 (559 aa).

A PH domain is found at 26–130 (GVAKAGYLHK…WMAFVRREIG (105 aa)). A disordered region spans residues 164 to 449 (LSSYPMDNED…EDSDEDYEKV (286 aa)). Acidic residues predominate over residues 170–184 (DNEDYEHEDEDDSYL). Residues Tyr-174 and Tyr-183 each carry the phosphotyrosine; by SYK modification. Positions 201 to 210 (PPAYPPPPVP) match the SH3-binding motif. Composition is skewed to pro residues over residues 202-213 (PAYPPPPVPVPR) and 233-242 (PLLPPPPPKR). Residues 252-265 (EDAKDALGLRRVEP) are compositionally biased toward basic and acidic residues. At Ser-277 the chain carries Phosphoserine. The span at 313–327 (TSSVSSSTTMAVATS) shows a compositional bias: low complexity. Over residues 360 to 371 (KIAEEPSPREAA) the composition is skewed to basic and acidic residues. Residues 375 to 386 (PVPPVAPRPPVQ) are compositionally biased toward pro residues. 2 positions are modified to phosphoserine: Ser-414 and Ser-425. A compositionally biased stretch (acidic residues) spans 437–446 (TGEEDSDEDY). Tyr-446 is subject to Phosphotyrosine; by SYK. In terms of domain architecture, SH2 spans 455–553 (VFVNTTESCE…HQSLLLRHPY (99 aa)).

In terms of processing, phosphorylated. Phosphorylation at Tyr-446 may stimulate the activity of the LYN kinase.

Functionally, binds differentially to the SH3 domains of certain proteins of signal transduction pathways. Binds to phosphatidylinositols; linking the hemopoietic tyrosine kinase fes to the cytoplasmic membrane in a phosphorylation dependent mechanism. The protein is SH3 domain-binding protein 2 (Sh3bp2) of Mus musculus (Mouse).